The following is an 88-amino-acid chain: Large ribosomal subunit protein bL27 (88 aa).

A disordered region spans residues methionine 1 to leucine 21.

This sequence belongs to the bacterial ribosomal protein bL27 family.

This chain is Large ribosomal subunit protein bL27, found in Parasynechococcus marenigrum (strain WH8102).